The sequence spans 186 residues: Peptidoglycan-recognition protein SD (186 aa).

Positions 1-18 (MTWIGLLIVGLTAIAVQG) are cleaved as a signal peptide. Residues 47–169 (AVIAHTAGGA…RQVSATKSPG (123 aa)) form the N-acetylmuramoyl-L-alanine amidase domain. A disulfide bridge links Cys-57 with Cys-63. A glycan (N-linked (GlcNAc...) asparagine) is linked at Asn-181.

Belongs to the N-acetylmuramoyl-L-alanine amidase 2 family. In terms of tissue distribution, in larvae, it is mainly expressed in fat body. Also expressed in uninduced hemocytes and mbn-2 cells.

The protein resides in the secreted. Peptidoglycan-recognition protein that plays a key role in innate immunity by binding to peptidoglycans (PGN) of Gram-positive bacteria and activating the Toll pathway. Has no activity against on Gram-negative bacteria and fungi. Shows some partial redundancy with PRPGP-SA in Gram-positive bacteria recognition. May act by activating the proteolytic cleavage of Spatzle and the subsequent activation of Toll pathway. Recognizes S.aureus PGN. In Drosophila melanogaster (Fruit fly), this protein is Peptidoglycan-recognition protein SD (PGRP-SD).